Here is a 492-residue protein sequence, read N- to C-terminus: Sestrin-3 (492 aa).

The tract at residues 62 to 243 (LVEEYSTSGR…VCDLANDNSI (182 aa)) is N-terminal domain; may mediate the alkylhydroperoxide reductase activity. The active-site Cysteine sulfenic acid (-SOH) intermediate is the cysteine 121. The segment at 310–492 (PHSDFEDDVI…ALRAITRHLT (183 aa)) is C-terminal domain; mediates TORC1 regulation. L-leucine is bound by residues 386–389 (TYNT), threonine 398, and glutamate 463.

The protein belongs to the sestrin family. Interacts with the GATOR2 complex which is composed of MIOS, SEC13, SEH1L, WDR24 and WDR59; the interaction is not regulated by leucine. Interacts with RRAGA, RRAGB, RRAGC and RRAGD; may function as a guanine nucleotide dissociation inhibitor for RRAGs and regulate them. Interacts with the TORC2 complex; through RICTOR. Detected in liver and skeletal muscles.

It localises to the cytoplasm. It carries out the reaction a hydroperoxide + L-cysteinyl-[protein] = S-hydroxy-L-cysteinyl-[protein] + an alcohol. Functionally, may function as an intracellular leucine sensor that negatively regulates the TORC1 signaling pathway. May also regulate the insulin-receptor signaling pathway through activation of TORC2. This metabolic regulator may also play a role in protection against oxidative and genotoxic stresses. May prevent the accumulation of reactive oxygen species (ROS) through the alkylhydroperoxide reductase activity born by the N-terminal domain of the protein. In Mus musculus (Mouse), this protein is Sestrin-3.